The sequence spans 455 residues: Pup--protein ligase (455 aa).

Residue Glu-12 participates in Mg(2+) binding. An ATP-binding site is contributed by Arg-56. Tyr-58 is a Mg(2+) binding site. Asp-60 serves as the catalytic Proton acceptor. Mg(2+) is bound at residue Glu-66. Positions 69 and 422 each coordinate ATP.

Belongs to the Pup ligase/Pup deamidase family. Pup-conjugating enzyme subfamily.

It carries out the reaction ATP + [prokaryotic ubiquitin-like protein]-L-glutamate + [protein]-L-lysine = ADP + phosphate + N(6)-([prokaryotic ubiquitin-like protein]-gamma-L-glutamyl)-[protein]-L-lysine.. It participates in protein degradation; proteasomal Pup-dependent pathway. The protein operates within protein modification; protein pupylation. Catalyzes the covalent attachment of the prokaryotic ubiquitin-like protein modifier Pup to the proteasomal substrate proteins, thereby targeting them for proteasomal degradation. This tagging system is termed pupylation. The ligation reaction involves the side-chain carboxylate of the C-terminal glutamate of Pup and the side-chain amino group of a substrate lysine. The polypeptide is Pup--protein ligase (Acidimicrobium ferrooxidans (strain DSM 10331 / JCM 15462 / NBRC 103882 / ICP)).